Reading from the N-terminus, the 462-residue chain is Stabilizer of axonemal microtubules 1 (462 aa).

Mn regions lie at residues 30–64, 65–97, 98–131, 132–165, 166–199, 200–232, 233–266, 267–299, 300–332, 333–366, 367–400, and 401–434; these read KPCF…KVNI, PMEG…PIQD, EMDF…QCND, KMEC…PASC, RFDH…LCNI, PLES…PSEV, PFDS…GLDI, PFPS…PPEG, KMDL…KKSD, RFES…FSDE, PMEY…RVNI, and PLEG…IFDE.

It belongs to the FAM154 family. Associates with microtubules via the Mn regions.

Its subcellular location is the cytoplasm. It localises to the cytoskeleton. The protein localises to the microtubule organizing center. It is found in the centrosome. The protein resides in the centriole. Its subcellular location is the cilium basal body. It localises to the cilium axoneme. In terms of biological role, may play a role in the regulation of cilium length. Stabilizes microtubules at low temperature. The protein is Stabilizer of axonemal microtubules 1 (Saxo1) of Rattus norvegicus (Rat).